The primary structure comprises 91 residues: ATP synthase subunit c 2 (91 aa).

2 helical membrane-spanning segments follow: residues 4–24 (FSMC…GTGI) and 53–73 (IGLA…LIIL).

Belongs to the ATPase C chain family. In terms of assembly, F-type ATPases have 2 components, F(1) - the catalytic core - and F(0) - the membrane proton channel. F(1) has five subunits: alpha(3), beta(3), gamma(1), delta(1), epsilon(1). F(0) has three main subunits: a(1), b(2) and c(10-14). The alpha and beta chains form an alternating ring which encloses part of the gamma chain. F(1) is attached to F(0) by a central stalk formed by the gamma and epsilon chains, while a peripheral stalk is formed by the delta and b chains.

The protein localises to the cell inner membrane. Its function is as follows. F(1)F(0) ATP synthase produces ATP from ADP in the presence of a proton or sodium gradient. F-type ATPases consist of two structural domains, F(1) containing the extramembraneous catalytic core and F(0) containing the membrane proton channel, linked together by a central stalk and a peripheral stalk. During catalysis, ATP synthesis in the catalytic domain of F(1) is coupled via a rotary mechanism of the central stalk subunits to proton translocation. Functionally, key component of the F(0) channel; it plays a direct role in translocation across the membrane. A homomeric c-ring of between 10-14 subunits forms the central stalk rotor element with the F(1) delta and epsilon subunits. This chain is ATP synthase subunit c 2, found in Pelobacter propionicus (strain DSM 2379 / NBRC 103807 / OttBd1).